A 140-amino-acid chain; its full sequence is MPLMPKRVKHRKMHRGSRSGNATSGTYVAFGDFGLQVLDRGWITNNQIEACRIAINRYLKRKGKVFIRIFPQKSFTSRPPDTRMGKGKGAVEGWVAVVRPGNILFEVGGVTESQAREALRLASNKLGVSTRFVYRQGVQH.

Positions 1–17 are enriched in basic residues; sequence MPLMPKRVKHRKMHRGS. The disordered stretch occupies residues 1-21; it reads MPLMPKRVKHRKMHRGSRSGN.

The protein belongs to the universal ribosomal protein uL16 family. In terms of assembly, part of the 50S ribosomal subunit.

Functionally, binds 23S rRNA and is also seen to make contacts with the A and possibly P site tRNAs. This chain is Large ribosomal subunit protein uL16, found in Akkermansia muciniphila (strain ATCC BAA-835 / DSM 22959 / JCM 33894 / BCRC 81048 / CCUG 64013 / CIP 107961 / Muc).